A 205-amino-acid polypeptide reads, in one-letter code: MHRLALVVATVAYLCAGHAPLQHITGTQRLVQVLIHNRYLAVRSDGTVGGTTYASSLDTVLQRIAIAHGRILLRNAVSCMYVCLDRCGAMYASAALSSDCILNEVMLENNYDVMFKIYNGKKTYVALDNTGNPRRVQLPRQRPLRMMNVYTFIMRIPLNYISVSQCAKPNKVIRHRKLPLVVQTTLNTISIYIITHVTMLFDHVD.

The N-terminal stretch at 1 to 17 (MHRLALVVATVAYLCAG) is a signal peptide.

This sequence belongs to the heparin-binding growth factors family.

The polypeptide is Fibroblast growth factor homolog (FGF) (Orgyia pseudotsugata multicapsid polyhedrosis virus (OpMNPV)).